A 76-amino-acid polypeptide reads, in one-letter code: ATP synthase subunit 9, mitochondrial (76 aa).

The next 2 helical transmembrane spans lie at 14–34 and 48–68; these read ISTI…AALI and FPFA…CLMV.

It belongs to the ATPase C chain family. F-type ATPases have 2 components, CF(1) - the catalytic core - and CF(0) - the membrane proton channel. CF(1) has five subunits: alpha(3), beta(3), gamma(1), delta(1), epsilon(1). CF(0) has three main subunits: a, b and c.

It localises to the mitochondrion membrane. Its function is as follows. Mitochondrial membrane ATP synthase (F(1)F(0) ATP synthase or Complex V) produces ATP from ADP in the presence of a proton gradient across the membrane which is generated by electron transport complexes of the respiratory chain. F-type ATPases consist of two structural domains, F(1) - containing the extramembraneous catalytic core and F(0) - containing the membrane proton channel, linked together by a central stalk and a peripheral stalk. During catalysis, ATP synthesis in the catalytic domain of F(1) is coupled via a rotary mechanism of the central stalk subunits to proton translocation. Part of the complex F(0) domain. A homomeric c-ring of probably 10 subunits is part of the complex rotary element. The polypeptide is ATP synthase subunit 9, mitochondrial (ATP9) (Cyberlindnera mrakii (Yeast)).